Here is a 195-residue protein sequence, read N- to C-terminus: Imidazoleglycerol-phosphate dehydratase (195 aa).

It belongs to the imidazoleglycerol-phosphate dehydratase family.

It is found in the cytoplasm. It carries out the reaction D-erythro-1-(imidazol-4-yl)glycerol 3-phosphate = 3-(imidazol-4-yl)-2-oxopropyl phosphate + H2O. Its pathway is amino-acid biosynthesis; L-histidine biosynthesis; L-histidine from 5-phospho-alpha-D-ribose 1-diphosphate: step 6/9. This is Imidazoleglycerol-phosphate dehydratase from Geobacter sp. (strain M21).